A 782-amino-acid chain; its full sequence is Sulfate permease family protein 3 (782 aa).

12 helical membrane-spanning segments follow: residues 30-52 (YACS…TWLP), 64-84 (LSGG…LASI), 86-106 (GVPP…YIFF), 113-133 (ALGG…KVML), 196-216 (IHVA…MGVF), 232-252 (GFVV…MLGI), 274-294 (LDNV…FLVF), 302-322 (WLNS…VVGI), 359-379 (HIGL…ITVA), 398-418 (ALGF…TSGF), 433-453 (LTCL…GPAL), and 497-517 (FFLT…GFAV). The STAS domain maps to 546-700 (KRDLERIQGN…NKVGDAVKAA (155 aa)). A compositionally biased stretch (acidic residues) spans 728–742 (IDEESSDSNDNDDAE). Positions 728–782 (IDEESSDSNDNDDAEIQERITEESENSEEVMSETSVSIEDATSLTSSRNSINSEE) are disordered. Over residues 767–782 (DATSLTSSRNSINSEE) the composition is skewed to polar residues.

This sequence belongs to the SLC26A/SulP transporter (TC 2.A.53) family.

It is found in the membrane. In terms of biological role, possible sulfate transporter. The chain is Sulfate permease family protein 3 (sulp-3) from Caenorhabditis elegans.